Consider the following 344-residue polypeptide: MANNVGVLLATDMQALPDSVEQWAIKNYEDKLSGGASLQVAKNILESSFKLEAGTSSMGAVVSLVQTPGLHSPAYLAEVARVLVSGGDLIVQEPLLAEAQEQKCSSAQTKAQLERNLLLAGFVNLEVVDSVVGVEIAKACTTSSVALNVVAVKSSKPSWDTGSVFQIRKKVSNQNGNFRTSGNYQPVKLTAGETVDDFPLNSKPAVKVDLSSDFKNDEEELIDEDDLLTEEDLKAPVLPAAESCAPTKKACKNCTCGRAELEEKEQETKLTTAQINNPTSSCGSCGLGDAFRCAGCPYRGMPTFKLGEKVFSGFLLWNQYIRSVPLISKLGNITLGGSLLVADA.

The segment at 1–169 (MANNVGVLLA…DTGSVFQIRK (169 aa)) is N-terminal SAM-like domain. The segment at 170 to 233 (KVSNQNGNFR…EDDLLTEEDL (64 aa)) is linker. [2Fe-2S] cluster is bound by residues C244, C251, C254, and C256. Residues 244–256 (CAPTKKACKNCTC) form a fe-S binding site A region. [4Fe-4S] cluster contacts are provided by C282, C285, C293, and C296. 2 consecutive short sequence motifs (cx2C motif) follow at residues 282 to 285 (CGSC) and 293 to 296 (CAGC). Positions 282 to 296 (CGSCGLGDAFRCAGC) are fe-S binding site B.

It belongs to the anamorsin family. As to quaternary structure, monomer. It depends on [2Fe-2S] cluster as a cofactor. The cofactor is [4Fe-4S] cluster.

The protein resides in the cytoplasm. The protein localises to the mitochondrion intermembrane space. In terms of biological role, component of the cytosolic iron-sulfur (Fe-S) protein assembly (CIA) machinery. Required for the maturation of extramitochondrial Fe-S proteins. Part of an electron transfer chain functioning in an early step of cytosolic Fe-S biogenesis, facilitating the de novo assembly of a [4Fe-4S] cluster on the cytosolic Fe-S scaffold complex. Electrons are transferred from NADPH via a FAD- and FMN-containing diflavin oxidoreductase. Together with the diflavin oxidoreductase, also required for the assembly of the diferric tyrosyl radical cofactor of ribonucleotide reductase (RNR), probably by providing electrons for reduction during radical cofactor maturation in the catalytic small subunit. This chain is Anamorsin homolog 1, found in Physcomitrium patens (Spreading-leaved earth moss).